The sequence spans 219 residues: Lipid transferase CIDEB (219 aa).

Phosphothreonine is present on T18. Positions 34–110 (PQRPFRVCDH…VLEQGQSWSP (77 aa)) constitute a CIDE-N domain.

This sequence belongs to the CIDE family. As to quaternary structure, interacts with DFFA. Interacts with DFFB; inhibited by DFFB. Interacts with APOB. Interacts with PREB/SEC12; facilitating loading of SCAP-SREBP into COPII vesicles. In terms of tissue distribution, highly enriched in the liver.

The protein localises to the lipid droplet. It is found in the endoplasmic reticulum membrane. It localises to the golgi apparatus. The protein resides in the cytoplasmic vesicle. Its subcellular location is the COPI-coated vesicle. In terms of biological role, lipid transferase specifically expressed in hepatocytes, which promotes unilocular lipid droplet formation by mediating lipid droplet fusion. Lipid droplet fusion promotes their enlargement, restricting lipolysis and favoring lipid storage. Localizes on the lipid droplet surface, at focal contact sites between lipid droplets, and mediates atypical lipid droplet fusion by promoting directional net neutral lipid transfer from the smaller to larger lipid droplets. The transfer direction may be driven by the internal pressure difference between the contacting lipid droplet pair. Promotes lipid exchange and lipid droplet fusion in both small and large lipid droplet-containing hepatocytes. In addition to its role in lipid droplet fusion, also involved in cytoplasmic vesicle biogenesis and transport. Required for very-low-density lipoprotein (VLDL) lipidation and maturation. Probably involved in the biogenesis of VLDL transport vesicles by forming a COPII vesicle coat and facilitating the formation of endoplasmic reticulum-derived large vesicles. Also involved in sterol-regulated export of the SCAP-SREBP complex, composed of SCAP, SREBF1/SREBP1 and SREBF2/SREBP2, by promoting loading of SCAP-SREBP into COPII vesicles. May also activate apoptosis. This chain is Lipid transferase CIDEB, found in Mus musculus (Mouse).